The sequence spans 218 residues: MPAKLGYWKIRGLQQPVRLLLEYLGEEYEEHLYGRDDREKWFGDKFNMGLDLPNLPYYIDDKCKLTQSVAIMRYIADKHGMLGTTPEERARISMIEGAAMDLRMGFVRVCYNPKFEEVKGDYLKELPTTLKMWSNFLGDRHYLTGSPVSHVDFMVYEALDCIRYLAPQCLEDFPKLKEFKSRIEDLPKIKAYMESEKFIKWPLNSWIASFGGGDAAPA.

In terms of domain architecture, GST N-terminal spans 2–83 (PAKLGYWKIR…YIADKHGMLG (82 aa)). Glutathione-binding positions include 7–8 (YW), 41–45 (WFGDK), 54–55 (NL), and 67–68 (QS). The GST C-terminal domain maps to 85 to 203 (TPEERARISM…ESEKFIKWPL (119 aa)). Substrate is bound at residue tyrosine 111.

This sequence belongs to the GST superfamily. Mu family. In terms of assembly, homodimer.

The protein localises to the cytoplasm. It catalyses the reaction RX + glutathione = an S-substituted glutathione + a halide anion + H(+). Conjugation of reduced glutathione to a wide number of exogenous and endogenous hydrophobic electrophiles. In terms of biological role, GST isoenzymes appear to play a central role in the parasite detoxification system. Other functions are also suspected including a role in increasing the solubility of haematin in the parasite gut. The protein is Glutathione S-transferase class-mu 26 kDa isozyme 51 of Fasciola hepatica (Liver fluke).